The chain runs to 297 residues: tRNA uridine(34) hydroxylase (297 aa).

The Rhodanese domain occupies 137–232 (RGDDVVFFDG…YGEKYGDKGL (96 aa)). The Cysteine persulfide intermediate role is filled by C192.

It belongs to the TrhO family.

The catalysed reaction is uridine(34) in tRNA + AH2 + O2 = 5-hydroxyuridine(34) in tRNA + A + H2O. Catalyzes oxygen-dependent 5-hydroxyuridine (ho5U) modification at position 34 in tRNAs. The sequence is that of tRNA uridine(34) hydroxylase from Corynebacterium urealyticum (strain ATCC 43042 / DSM 7109).